A 1043-amino-acid chain; its full sequence is Unconventional myosin-Ia (1043 aa).

The Myosin motor domain occupies 8 to 694 (VGVEDLVLLE…TLFYLEEQRR (687 aa)). 101–108 (GESGAGKT) contacts ATP. An actin-binding region spans residues 571 to 593 (VTTLMKNLYSKNPNYIRCIKPNE). IQ domains lie at 697 to 719 (LQQL…HYQL), 720 to 742 (MRKS…HYRK), and 743 to 772 (MKAS…SGAA). One can recognise a TH1 domain in the interval 858 to 1042 (KASYPQSVPI…KGSRCLEVTV (185 aa)).

This sequence belongs to the TRAFAC class myosin-kinesin ATPase superfamily. Myosin family. Post-translationally, phosphorylated by ALPK1.

Functionally, involved in directing the movement of organelles along actin filaments. The protein is Unconventional myosin-Ia (MYO1A) of Bos taurus (Bovine).